A 506-amino-acid polypeptide reads, in one-letter code: Maturase K (506 aa).

The protein belongs to the intron maturase 2 family. MatK subfamily.

It is found in the plastid. The protein resides in the chloroplast. Usually encoded in the trnK tRNA gene intron. Probably assists in splicing its own and other chloroplast group II introns. This Trifolium spumosum (Mediterranean clover) protein is Maturase K.